The following is a 216-amino-acid chain: MFFKMLKEDVDVVFDQDPAARSYIEVILTYSGLHAIWAHRIAHALYKRKRFFIARAISQIARFFTGIEIHPGAKIGRRFFIDHGMGVVIGETCEIGNNVTVFQGVTLGGTGKEKGKRHPTIEDDALISTGAKVLGSITVGRGAKIGAGSVVLHDVPECSTVVGIPGRVVVQNGKKIRRDLNHQDLPDPVADRFRELENEIRQLKQELRRKEREDEL.

The protein belongs to the transferase hexapeptide repeat family.

Its subcellular location is the cytoplasm. It carries out the reaction L-serine + acetyl-CoA = O-acetyl-L-serine + CoA. Its pathway is amino-acid biosynthesis; L-cysteine biosynthesis; L-cysteine from L-serine: step 1/2. With respect to regulation, inhibited by cysteine. Catalyzes the acetylation of serine by acetyl-CoA to produce O-acetylserine (OAS). The protein is Serine acetyltransferase of Bacillus licheniformis (strain ATCC 14580 / DSM 13 / JCM 2505 / CCUG 7422 / NBRC 12200 / NCIMB 9375 / NCTC 10341 / NRRL NRS-1264 / Gibson 46).